The following is a 517-amino-acid chain: Cytochrome P450 monooxygenase ausI (517 aa).

A helical transmembrane segment spans residues 8–28; that stretch reads LAPLGQPWIAGLVVVSAVLYL. Cysteine 457 contacts heme.

It belongs to the cytochrome P450 family. Requires heme as cofactor.

It is found in the membrane. The protein operates within secondary metabolite biosynthesis; terpenoid biosynthesis. In terms of biological role, cytochrome P450 monooxygenase; part of the gene cluster that mediates the biosynthesis of calidodehydroaustin, a fungal meroterpenoid. The first step of the pathway is the synthesis of 3,5-dimethylorsellinic acid by the polyketide synthase ausA. 3,5-dimethylorsellinic acid is then prenylated by the polyprenyl transferase ausN. Further epoxidation by the FAD-dependent monooxygenase ausM and cyclization by the probable terpene cyclase ausL lead to the formation of protoaustinoid A. Protoaustinoid A is then oxidized to spiro-lactone preaustinoid A3 by the combined action of the FAD-binding monooxygenases ausB and ausC, and the dioxygenase ausE. Acid-catalyzed keto-rearrangement and ring contraction of the tetraketide portion of preaustinoid A3 by ausJ lead to the formation of preaustinoid A4. The aldo-keto reductase ausK, with the help of ausH, is involved in the next step by transforming preaustinoid A4 into isoaustinone which is in turn hydroxylated by the P450 monooxygenase ausI to form austinolide. The cytochrome P450 monooxygenase ausG modifies austinolide to austinol. Austinol is further acetylated to austin by the O-acetyltransferase ausP, which spontaneously changes to dehydroaustin. The cytochrome P450 monooxygenase ausR then converts dehydroaustin is into 7-dehydrodehydroaustin. The hydroxylation catalyzed by ausR permits the O-acetyltransferase ausQ to add an additional acetyl group to the molecule, leading to the formation of acetoxydehydroaustin. The short chain dehydrogenase ausT catalyzes the reduction of the double bond present between carbon atoms 1 and 2 to convert 7-dehydrodehydroaustin into 1,2-dihydro-7-hydroxydehydroaustin. AusQ catalyzes not only an acetylation reaction but also the addition of the PKS ausV diketide product to 1,2-dihydro-7-hydroxydehydroaustin, forming precalidodehydroaustin. Finally, the iron/alpha-ketoglutarate-dependent dioxygenase converts precalidodehydroaustin into calidodehydroaustin. The polypeptide is Cytochrome P450 monooxygenase ausI (Aspergillus calidoustus).